Consider the following 553-residue polypeptide: Coiled-coil domain-containing protein 22 homolog (553 aa).

2 coiled-coil regions span residues 261 to 404 and 498 to 553; these read LEEL…TATQ and NVTK…VAKA.

This sequence belongs to the CCDC22 family.

This chain is Coiled-coil domain-containing protein 22 homolog, found in Drosophila pseudoobscura pseudoobscura (Fruit fly).